We begin with the raw amino-acid sequence, 402 residues long: 1-deoxy-D-xylulose 5-phosphate reductoisomerase (402 aa).

Residues Thr-10, Gly-11, Ser-12, Ile-13, Asn-38, and Asn-124 each contribute to the NADPH site. Position 125 (Lys-125) interacts with 1-deoxy-D-xylulose 5-phosphate. Glu-126 contacts NADPH. A Mn(2+)-binding site is contributed by Asp-150. Ser-151, Glu-152, Ser-186, and His-209 together coordinate 1-deoxy-D-xylulose 5-phosphate. Mn(2+) is bound at residue Glu-152. Gly-215 contributes to the NADPH binding site. The 1-deoxy-D-xylulose 5-phosphate site is built by Ser-222, Asn-227, Lys-228, and Glu-231. Glu-231 contacts Mn(2+).

This sequence belongs to the DXR family. Mg(2+) is required as a cofactor. Mn(2+) serves as cofactor.

It catalyses the reaction 2-C-methyl-D-erythritol 4-phosphate + NADP(+) = 1-deoxy-D-xylulose 5-phosphate + NADPH + H(+). Its pathway is isoprenoid biosynthesis; isopentenyl diphosphate biosynthesis via DXP pathway; isopentenyl diphosphate from 1-deoxy-D-xylulose 5-phosphate: step 1/6. Functionally, catalyzes the NADPH-dependent rearrangement and reduction of 1-deoxy-D-xylulose-5-phosphate (DXP) to 2-C-methyl-D-erythritol 4-phosphate (MEP). The protein is 1-deoxy-D-xylulose 5-phosphate reductoisomerase of Vibrio vulnificus (strain CMCP6).